We begin with the raw amino-acid sequence, 2715 residues long: Teneurin-3 (2715 aa).

Disordered regions lie at residues 1 to 38 (MDVKERRPYCSLTKSRREKERRYTNSSADNEECRVPTQ) and 142 to 223 (GRSS…AALP). One can recognise a Teneurin N-terminal domain in the interval 1–309 (MDVKERRPYC…KSSKYCSWRC (309 aa)). Residues 1–310 (MDVKERRPYC…SSKYCSWRCT (310 aa)) lie on the Cytoplasmic side of the membrane. The span at 142–153 (GRSSCLSSRSNS) shows a compositional bias: low complexity. Residues 159-168 (DTEHENRSDS) show a composition bias toward basic and acidic residues. Polar residues predominate over residues 171 to 182 (EQPSNNPGQPTL). A compositionally biased stretch (low complexity) spans 201 to 213 (TSLNRNSLTNRRN). Residues 311 to 331 (ALCAVGVSVLLAILLSYFIAM) form a helical membrane-spanning segment. Residues 332 to 2715 (HLFGLNWHLQ…FLRQSEIGKR (2384 aa)) lie on the Extracellular side of the membrane. 3 N-linked (GlcNAc...) asparagine glycosylation sites follow: Asn-345, Asn-380, and Asn-419. EGF-like domains lie at 514–545 (SVVECPRNCHGNGECVSGTCHCFPGFLGPDCS), 546–576 (RAACPVLCSGNGQYSKGRCLCFSGWKGTECD), 578–610 (PTTQCIDPQCGGRGICIMGSCACNSGYKGENCE), 611–642 (EADCLDPGCSNHGVCIHGECHCNPGWGGSNCE), 644–677 (LKTMCADQCSGHGTYLQESGSCTCDPNWTGPDCS), 678–709 (NEICSVDCGSHGVCMGGSCRCEEGWTGPACNQ), 710–739 (RACHPRCAEHGTCKDGKCECSQGWNGEHCT), and 740–783 (IAHY…AGCD). 22 cysteine pairs are disulfide-bonded: Cys-518–Cys-528, Cys-522–Cys-533, Cys-535–Cys-544, Cys-553–Cys-564, Cys-566–Cys-575, Cys-582–Cys-593, Cys-587–Cys-598, Cys-600–Cys-609, Cys-614–Cys-625, Cys-619–Cys-630, Cys-632–Cys-641, Cys-652–Cys-665, Cys-667–Cys-676, Cys-681–Cys-691, Cys-685–Cys-696, Cys-698–Cys-707, Cys-712–Cys-722, Cys-716–Cys-727, Cys-729–Cys-738, Cys-752–Cys-762, Cys-756–Cys-771, and Cys-773–Cys-782. N-linked (GlcNAc...) asparagine glycosylation occurs at Asn-670. N-linked (GlcNAc...) asparagine glycans are attached at residues Asn-869 and Asn-892. An NHL 1 repeat occupies 1181 to 1209 (LLAPVALACGIDGSLYVGDFNYVRRIFPS). A glycan (N-linked (GlcNAc...) asparagine) is linked at Asn-1211. 5 NHL repeats span residues 1216–1260 (LELR…PKSL), 1286–1330 (ARCG…NGII), 1347–1387 (CDTS…ITEN), 1418–1445 (LESATAIAVSYSGVLYITETDEKKINRI), and 1474–1517 (CYQS…VSKN). The YD 1 repeat unit spans residues 1527–1546 (YEVASPTDQELYIFDINGTH). 2 N-linked (GlcNAc...) asparagine glycosylation sites follow: Asn-1543 and Asn-1560. YD repeat units lie at residues 1563 to 1583 (YSNDNDVTAVTDSNGNTLRIR), 1626 to 1645 (YHGNSGLLATKSDETGWTTF), and 1646 to 1668 (FDYDSEGRLTNVTFPTGVVTNLH). N-linked (GlcNAc...) asparagine glycosylation is found at Asn-1656, Asn-1693, Asn-1751, and Asn-1836. YD repeat units follow at residues 1839–1858 (YSSTGQIASIQRGTTSEKVD), 1880–1898 (YLEKSMVLLLHSQRQYIFE), 1899–1919 (YDMWDRLSAITMPSVARHTMQ), 1926–1943 (YYRNIYNPPESNASIITD), 1944–1965 (YNEEGLLLQTAFLGTSRRVLFK), 1966–1983 (YRRQTRLSEILYDSTRVS), 1986–2006 (YDETAGVLKTVNLQSDGFICT), 2009–2029 (YRQIGPLIDRQIFRFSEDGMV), 2037–2056 (YDNSFRVTSMQGVINETPLP), 2062–2079 (FDDISGKVEQFGKFGVIY), 2080–2106 (YDINQIISTAVMTYTKHFDAHGRIKEI), 2108–2121 (YEIFRSLMYWITIQ), 2122–2145 (YDNMGRVTKREIKIGPFANTTKYA), 2148–2168 (YDVDGQLQTVYLNEKIMWRYN), 2169–2189 (YDLNGNLHLLNPSSSARLTPL), 2191–2211 (YDLRDRITRLGDVQYRLDEDG), 2223–2243 (YSSKGLLTRVYSKGSGWTVIY), and 2245–2265 (YDGLGRRVSSKTSLGQHLQFF). An N-linked (GlcNAc...) asparagine glycan is attached at Asn-1937. The N-linked (GlcNAc...) asparagine glycan is linked to Asn-2140. An N-linked (GlcNAc...) asparagine glycan is attached at Asn-2280. The stretch at 2291-2332 (YDLQGHLFAMEISSGDEFYIASDNTGTPLAVFSSNGLMLKQT) is one YD 23 repeat. An N-linked (GlcNAc...) asparagine glycan is attached at Asn-2592.

This sequence belongs to the tenascin family. Teneurin subfamily. As to quaternary structure, homodimer; disulfide-linked; to mediate homophilic cell adhesion. Most isoforms (isoform-type A and type-B) can mediate homophilic interaction. Heterodimer with either TENM1 or TENM2. May also form heterodimer with TENM4. Isoform A0B0: Does not form homodimer to mediate homophilic cell adhesion. Isoform A0B0: Heterodimer with ADGRL3. In brain, expressed in highly specific regions of the postnatal brain: expressed in restricted domains of the developing hippocampal region, including proximal CA1, distal subiculum, and medial entorhinal cortex (at protein level). Expression matches with topographic connectivity between entorhinal cortex, CA1, and subiculum (at protein level). Also specifically expressed in subregions of the presubiculum, parasubiculum, medial mammillary nucleus and anteroventral thalamic nucleus that are topographically connected with subiculum or entorhinal cortex (at protein level). Expressed in neurons of the developing visual pathway (at protein level). Expressed in the dorsal and ventral lateral geniculate nucleus (dLGN and vLGN) and optic tract at birth. Expressed in ipsilateral retinal axons of terminal zones (TZs) in the developing superior colliculus (SC) throughout the first postnatal week. Expressed in the layer V of the visual caudal cortex. Expressed in the femoral and mandibular condylar cartilages. Strongly expressed in fibrous and proliferating chondrocytes. Poorly expressed in mature chondrocytes. Not expressed in hypertrophic chondrocytes.

It localises to the cell membrane. Its subcellular location is the cell projection. The protein resides in the axon. Functionally, involved in neural development by regulating the establishment of proper connectivity within the nervous system. Acts in both pre- and postsynaptic neurons in the hippocampus to control the assembly of a precise topographic projection: required in both CA1 and subicular neurons for the precise targeting of proximal CA1 axons to distal subiculum, probably by promoting homophilic cell adhesion. Promotes homophilic adhesion in a splicing isoform-dependent manner: most isoforms (isoform-type A and type-B) can mediate homophilic interaction. Promotes axon guidance. Required for proper dendrite morphogenesis and axon targeting in the vertebrate visual system, thereby playing a key role in the development of the visual pathway. Regulates the formation in ipsilateral retinal mapping to both the dorsal lateral geniculate nucleus (dLGN) and the superior colliculus (SC). May also be involved in the differentiation of the fibroblast-like cells in the superficial layer of mandibular condylar cartilage into chondrocytes. This chain is Teneurin-3, found in Mus musculus (Mouse).